The primary structure comprises 466 residues: MATVDTILQGKYPAKAHARRVAEYLQAQCPGNPGVIYLESQKTRMIEDNDETMPFRQRRPFFYLSGCLLPEASLVYDVSADKLTLFIPAIDPEDVIWSGLPLSPSEAMELYDVDNVLTTPEVNATLASIASAHNGKAVAYAIQGRTSPETKFEGFQDANFTLLNGWIEQARVVKDAYEIALLRKANDISTKAHIAAIKAAKTATNEREIEGAFIATCIANGAREQSYHPIVACGENGATLHYPKNDAELTDPVTKQRKKNVLIDAGGEYRTYCADITRVIPLGGRFAQETRQIYQIVLQMQLECIAMLKDGVLWDDVHAHAHRVAIKGLLQLGILRGSEDELFEKRVSVAFFPHGLGHYLGMDTHDTGGNPNYGDKDKMFRYLRVRGHLPAGSVITVEPGIYFCRFIIEPYIKSPETSKYIDTDVLERYWSVGGVRIEDNVHVTKDGYENLTTAPKIMEEVESLAL.

Positions 264, 275, 398, and 438 each coordinate Mn(2+).

The protein belongs to the peptidase M24B family. Mn(2+) is required as a cofactor.

It catalyses the reaction Release of any N-terminal amino acid, including proline, that is linked to proline, even from a dipeptide or tripeptide.. In terms of biological role, catalyzes the removal of a penultimate prolyl residue from the N-termini of peptides. This Aspergillus terreus (strain NIH 2624 / FGSC A1156) protein is Probable Xaa-Pro aminopeptidase pepP (pepP).